The chain runs to 245 residues: Sec-independent protein translocase protein TatC (245 aa).

A run of 6 helical transmembrane segments spans residues Phe-17 to Ile-37, Phe-73 to Ala-93, Phe-107 to Val-127, Val-159 to Ile-179, Phe-191 to Pro-207, and Val-210 to Ile-230.

This sequence belongs to the TatC family. As to quaternary structure, the Tat system comprises two distinct complexes: a TatABC complex, containing multiple copies of TatA, TatB and TatC subunits, and a separate TatA complex, containing only TatA subunits. Substrates initially bind to the TatABC complex, which probably triggers association of the separate TatA complex to form the active translocon.

The protein resides in the cell inner membrane. Part of the twin-arginine translocation (Tat) system that transports large folded proteins containing a characteristic twin-arginine motif in their signal peptide across membranes. Together with TatB, TatC is part of a receptor directly interacting with Tat signal peptides. This chain is Sec-independent protein translocase protein TatC, found in Campylobacter jejuni subsp. jejuni serotype O:2 (strain ATCC 700819 / NCTC 11168).